A 232-amino-acid polypeptide reads, in one-letter code: MPSLWDRFSSSSTSSSPSSLPRTPTPDRPPRSAWGSATREEGFDRSTSLESSDCESLDSSNSGFGPEEDTAYLDGVSLPDFELLSDPEDEHLCANLMQLLQESLAQARLGSRRPARLLMPSQLVSQVGKELLRLAYSEPCGLRGALLDVCVEQGKSCHSVGQLALDPSLVPTFQLTLVLRLDSRLWPKIQGLFSSANSPFLPGFSQSLTLSTGFRVIKKKLYSSEQLLIEEC.

The interval 1-71 is disordered; sequence MPSLWDRFSS…SGFGPEEDTA (71 aa). A compositionally biased stretch (low complexity) spans 9 to 22; sequence SSSSTSSSPSSLPR. Ser19 carries the post-translational modification Phosphoserine. A phosphothreonine mark is found at Thr23 and Thr25. Residue Ser121 is modified to Phosphoserine.

The protein belongs to the DDIT4 family. As to quaternary structure, monomer. Interacts with BTRC. Identified in a complex with CUL4A, DDB1 and BTRC. Interacts with TXNIP; this inhibits the proteasomal degradation of DDIT4. In terms of processing, phosphorylated by GSK3B; this promotes proteasomal degradation. Post-translationally, polyubiquitinated by a DCX (DDB1-CUL4A-RBX1) E3 ubiquitin-protein ligase complex with BTRC as substrate-recognition component, leading to its proteasomal degradation. Broadly expressed, with lowest levels in brain, skeletal muscle and intestine. Up-regulated in substantia nigra neurons from Parkinson disease patients (at protein level).

The protein localises to the mitochondrion. It localises to the cytoplasm. Its subcellular location is the cytosol. Functionally, regulates cell growth, proliferation and survival via inhibition of the activity of the mammalian target of rapamycin complex 1 (mTORC1). Inhibition of mTORC1 is mediated by a pathway that involves DDIT4/REDD1, AKT1, the TSC1-TSC2 complex and the GTPase RHEB. Plays an important role in responses to cellular energy levels and cellular stress, including responses to hypoxia and DNA damage. Regulates p53/TP53-mediated apoptosis in response to DNA damage via its effect on mTORC1 activity. Its role in the response to hypoxia depends on the cell type; it mediates mTORC1 inhibition in fibroblasts and thymocytes, but not in hepatocytes. Required for mTORC1-mediated defense against viral protein synthesis and virus replication. Inhibits neuronal differentiation and neurite outgrowth mediated by NGF via its effect on mTORC1 activity. Required for normal neuron migration during embryonic brain development. Plays a role in neuronal cell death. This is DNA damage-inducible transcript 4 protein (DDIT4) from Homo sapiens (Human).